A 149-amino-acid polypeptide reads, in one-letter code: Large ribosomal subunit protein bL9 (149 aa).

It belongs to the bacterial ribosomal protein bL9 family.

Binds to the 23S rRNA. The protein is Large ribosomal subunit protein bL9 of Synechococcus sp. (strain JA-2-3B'a(2-13)) (Cyanobacteria bacterium Yellowstone B-Prime).